The sequence spans 296 residues: Coatomer subunit epsilon (296 aa).

This sequence belongs to the COPE family. As to quaternary structure, oligomeric complex that consists of at least the alpha, beta, beta', gamma, delta, epsilon and zeta subunits. Interacts with the ESCRT-0 subunit VPS27.

The protein resides in the cytoplasm. It localises to the golgi apparatus membrane. It is found in the cytoplasmic vesicle. The protein localises to the COPI-coated vesicle membrane. The coatomer is a cytosolic protein complex that binds to dilysine motifs and reversibly associates with Golgi non-clathrin-coated vesicles, which further mediate biosynthetic protein transport from the ER, via the Golgi up to the trans Golgi network. The coatomer complex is required for budding from Golgi membranes, and is essential for the retrograde Golgi-to-ER transport of dilysine-tagged proteins. The polypeptide is Coatomer subunit epsilon (SEC28) (Saccharomyces cerevisiae (strain ATCC 204508 / S288c) (Baker's yeast)).